The primary structure comprises 100 residues: MIREERLLKVLRAPHVSEKASAAMEKNNTIVLKVAKDATKAEIKAAVQKLFEVEVEDVNTLLVKGKSKRHGQRVGRRSDWKKAYVTLKEGQNLDFIGGAE.

It belongs to the universal ribosomal protein uL23 family. As to quaternary structure, part of the 50S ribosomal subunit. Contacts protein L29, and trigger factor when it is bound to the ribosome.

One of the early assembly proteins it binds 23S rRNA. One of the proteins that surrounds the polypeptide exit tunnel on the outside of the ribosome. Forms the main docking site for trigger factor binding to the ribosome. The sequence is that of Large ribosomal subunit protein uL23 from Yersinia enterocolitica serotype O:8 / biotype 1B (strain NCTC 13174 / 8081).